The sequence spans 204 residues: Glideosome-associated protein 45 (204 aa).

The segment at 1–86 (MGNKCSRSKV…KEEIDYATQE (86 aa)) is disordered. Gly2 carries N-myristoyl glycine lipidation. Residues 2 to 29 (GNKCSRSKVKEPKRKDIDELAERENLKK) form a targets GAP45 to the cell membrane; however, dispensable for the formation of the glideosome complex and the association with the inner membrane complex region. A compositionally biased stretch (basic and acidic residues) spans 9-53 (KVKEPKRKDIDELAERENLKKQSEEIIEEKPEEVVEQVEETHEEP). The segment covering 54–73 (LEQEQELDEQKIEEEEEEPE) has biased composition (acidic residues). Position 89 is a phosphoserine; by CPK10 (Ser89). Phosphoserine; by CPK10 and PKB is present on Ser103. Ser149 is modified (phosphoserine; by CPK10).

In terms of assembly, component of the glideosome complex composed of GAP50, GAP45, MTIP and MyoA; the complex is formed during the late schizont stage and in merozoites. MyoA, MTIP and GAP45 probably form an initial complex in the cytoplasm which is then recruited to the outer face of the inner membrane complex via the interaction with GAP50. Interacts with GAP50; the interaction is independent of GAP45 phosphorylation status and can also occur independently of the formation of the glideosome complex. Phosphorylated at multiple sites. Phosphorylation increases during the schizont stage and peaks in segmented merozoites. May be phosphorylated by PKB. In schizonts, phosphorylated at Ser-89 and Ser-149 in response to phospholipase C-mediated calcium release. Phosphorylation at Ser-149 begins in early schizonts while phosphorylation at Ser-103 begins in late schizonts. Phosphorylation at Ser-89, Ser-103 and Ser-149 appears to be dispensable for GAP45 inner membrane complex localization or GAP45 inclusion in the glideosome complex. Phosphorylation is not required for interaction with GAP50; however, it may regulate the interaction with MTIP and MyoA. Post-translationally, N-myristoylated by NMT. N-myristoylation may contribute to the targeting of GAP45 to the inner membrane complex with the subsequent palmitoylation strengthening the interaction with the membrane. In terms of processing, palmitoylated. Palmitoylation appears to follow N-myristoylation and may strengthen the interaction with the inner membrane complex.

It is found in the inner membrane complex. Component of the glideosome complex, an inner membrane complex structure involved in parasite gliding motility and host cell invasion. During the asexual blood stage, required in schizonts to recruit MTIP and MyoA to the inner membrane complex where they assemble with GAP50 to form the glideosome complex. By regulating the formation of the glideosome, plays an essential role during merozoite invasion of host erythrocytes. The sequence is that of Glideosome-associated protein 45 from Plasmodium falciparum (isolate 3D7).